A 262-amino-acid chain; its full sequence is 3-deoxy-manno-octulosonate cytidylyltransferase (262 aa).

Belongs to the KdsB family.

Its subcellular location is the cytoplasm. The enzyme catalyses 3-deoxy-alpha-D-manno-oct-2-ulosonate + CTP = CMP-3-deoxy-beta-D-manno-octulosonate + diphosphate. The protein operates within nucleotide-sugar biosynthesis; CMP-3-deoxy-D-manno-octulosonate biosynthesis; CMP-3-deoxy-D-manno-octulosonate from 3-deoxy-D-manno-octulosonate and CTP: step 1/1. It functions in the pathway bacterial outer membrane biogenesis; lipopolysaccharide biosynthesis. In terms of biological role, activates KDO (a required 8-carbon sugar) for incorporation into bacterial lipopolysaccharide in Gram-negative bacteria. The polypeptide is 3-deoxy-manno-octulosonate cytidylyltransferase (Blochmanniella pennsylvanica (strain BPEN)).